A 213-amino-acid polypeptide reads, in one-letter code: RNA pyrophosphohydrolase (213 aa).

Positions 6–149 constitute a Nudix hydrolase domain; that stretch reads GFRPNVGIVL…KRGVYEIALT (144 aa). The short motif at 38–59 is the Nudix box element; it reads GGIDRGETPEQAMIRELHEEVG. The tract at residues 185 to 213 is disordered; it reads NFELPPGGSFEPNPQTSYGLDASGKPHET.

It belongs to the Nudix hydrolase family. RppH subfamily. A divalent metal cation is required as a cofactor.

In terms of biological role, accelerates the degradation of transcripts by removing pyrophosphate from the 5'-end of triphosphorylated RNA, leading to a more labile monophosphorylated state that can stimulate subsequent ribonuclease cleavage. This Albidiferax ferrireducens (strain ATCC BAA-621 / DSM 15236 / T118) (Rhodoferax ferrireducens) protein is RNA pyrophosphohydrolase.